The chain runs to 55 residues: Large ribosomal subunit protein bL33 (55 aa).

The protein belongs to the bacterial ribosomal protein bL33 family.

This Baumannia cicadellinicola subsp. Homalodisca coagulata protein is Large ribosomal subunit protein bL33.